The chain runs to 330 residues: Delta-aminolevulinic acid dehydratase (330 aa).

Zn(2+) is bound by residues Cys-122, Cys-124, His-131, and Cys-132. The active-site Schiff-base intermediate with substrate is Lys-199. Residue Lys-199 is modified to N6-succinyllysine. Arg-209 is a binding site for 5-aminolevulinate. Ser-215 carries the phosphoserine modification. Residue Arg-221 participates in 5-aminolevulinate binding. Residue Cys-223 participates in Zn(2+) binding. Lys-252 serves as the catalytic Schiff-base intermediate with substrate. An N6-succinyllysine modification is found at Lys-252. The 5-aminolevulinate site is built by Ser-279 and Tyr-318.

The protein belongs to the ALAD family. Homooctamer; active form. Homohexamer; low activity form. The cofactor is Zn(2+).

It is found in the cytoplasm. The protein resides in the cytosol. It carries out the reaction 2 5-aminolevulinate = porphobilinogen + 2 H2O + H(+). It participates in porphyrin-containing compound metabolism; protoporphyrin-IX biosynthesis; coproporphyrinogen-III from 5-aminolevulinate: step 1/4. With respect to regulation, can alternate between a fully active homooctamer and a low-activity homohexamer. A bound magnesium ion may promote the assembly of the fully active homooctamer. The magnesium-binding site is absent in the low-activity homohexamer. Inhibited by compounds that favor the hexameric state. Inhibited by divalent lead ions. The lead ions partially displace the zinc cofactor. Its function is as follows. Catalyzes an early step in the biosynthesis of tetrapyrroles. Binds two molecules of 5-aminolevulinate per subunit, each at a distinct site, and catalyzes their condensation to form porphobilinogen. The polypeptide is Delta-aminolevulinic acid dehydratase (Alad) (Rattus norvegicus (Rat)).